Here is a 330-residue protein sequence, read N- to C-terminus: Short chain dehydrogenase macD (330 aa).

Lys-57, Asp-86, Asn-113, Tyr-204, and Lys-208 together coordinate NADP(+). Tyr-204 serves as the catalytic Proton donor. Residue Lys-208 is the Lowers pKa of active site Tyr of the active site.

The protein belongs to the short-chain dehydrogenases/reductases (SDR) family.

It functions in the pathway secondary metabolite biosynthesis; terpenoid biosynthesis. Functionally, short chain dehydrogenase; part of the gene cluster that mediates the biosynthesis of macrophorins, isoprenoid epoxycyclohexenones containing cyclized drimane moieties. The first step of the pathway is the synthesis of 6-methylsalicylic acid (6-MSA) by the polyketide synthase macA. 6-MSA is then converted to m-cresol by the decarboxylase macB. The cytochrome P450 monooxygenase macC then catalyzes the oxidation of m-cresol to toluquinol. Epoxidation of toluquinol is then performed by the short chain dehydrogenase macD, with the help of macE, and a further prenylation by macG leads to 7-deacetoxyyanuthone A. The next step is the hydroxylation of C-22 of 7-deacetoxyyanuthone A by the cytochrome P450 monooxygenase macH to yield 22-deacetylyanuthone A. O-Mevalon transferase macI then attaches mevalon to the hydroxyl group of 22-deacetylyanuthone A to produce yanuthone E. The terpene cyclase macJ catalyzes the cyclization of 22-deacetylyanuthone A to macrophorin A. MacJ is also able to catalyze cyclization of yanuthone E and 7-deacetoxyyanuthone A to their corresponding macrophorins. The macJ products can be further modified by macH and macJ, as well as by the FAD-dependent monooxygenase macF, to produce additional macrophorins, including 4'-oxomacrophorin A, 4'-oxomacrophorin D and 4'-oxomacrophorin E. The protein is Short chain dehydrogenase macD of Penicillium terrestre.